Reading from the N-terminus, the 319-residue chain is Ataxin-3 homolog (319 aa).

The 172-residue stretch at 8–179 (ISSIFFERQQ…NSEADDFITL (172 aa)) folds into the Josephin domain. Cys21 serves as the catalytic Nucleophile. Catalysis depends on His118, which acts as the Proton acceptor. The active site involves Asn133. UIM domains follow at residues 218–237 (QEDR…KESS) and 242–261 (SDED…DPNI). Residues 253–319 (MSLSQDPNIP…EKKSQNVPEE (67 aa)) are disordered. Over residues 254 to 267 (SLSQDPNIPSTSAA) the composition is skewed to polar residues. Positions 295-313 (QQRRDRAKFLEKLEEEKKS) are enriched in basic and acidic residues. The tract at residues 297 to 300 (RRDR) is interaction with cdc-48.1 and cdc-48.2.

Forms a complex composed of deubiquitinating enzyme atx-3, adapter ubxn-5 and cdc-48.1. Forms a complex composed of deubiquitinating enzyme atx-3, E4 ubiquitin-protein ligase ufd-2 and cdc-48.1. Interacts (via RRDR motif) with cdc-48.1 (via N-terminus) and cdc-48.2 (via N-terminus); the interaction with cdc-48.1 is not required for atx-3 enzymatic activity. Interacts (via C-terminus) with ubxn-5. May interact with ned-8.

Its subcellular location is the cytoplasm. It is found in the nucleus. The protein resides in the nucleolus. It catalyses the reaction Thiol-dependent hydrolysis of ester, thioester, amide, peptide and isopeptide bonds formed by the C-terminal Gly of ubiquitin (a 76-residue protein attached to proteins as an intracellular targeting signal).. In terms of biological role, acts as a chain editing deubiquitinating enzyme that binds and cleaves 'Lys-48'-linked polyubiquitin chains, with a preference for chains containing four or more ubiquitin molecules thereby modulating protein degradation by the ubiquitin-proteasome pathway. Probably by regulating the IGF-1-insulin-like pathway, regulates lifespan. Regulates germline DNA double-strand-break repair and apoptosis in response to DNA damage by recruiting E4 ubiquitin-protein ligase ufd-2 to DNA repair foci. Interacts with key regulators of transcription and represses transcription. Acts as a histone-binding protein that regulates transcription. The sequence is that of Ataxin-3 homolog from Caenorhabditis briggsae.